A 233-amino-acid chain; its full sequence is Small ribosomal subunit protein uS2 (233 aa).

This sequence belongs to the universal ribosomal protein uS2 family.

In Clostridium acetobutylicum (strain ATCC 824 / DSM 792 / JCM 1419 / IAM 19013 / LMG 5710 / NBRC 13948 / NRRL B-527 / VKM B-1787 / 2291 / W), this protein is Small ribosomal subunit protein uS2.